The chain runs to 411 residues: GTPase Obg (411 aa).

An Obg domain is found at 1–157; the sequence is MQFIDEARFV…REIRLELRVL (157 aa). Positions 20–45 are disordered; the sequence is AVSFHREKYRPRGGPDGGRGGDGGSV. The span at 33 to 43 shows a compositional bias: gly residues; the sequence is GPDGGRGGDGG. Residues 158–330 enclose the OBG-type G domain; the sequence is SDVGLVGLPN…LERSAEAAPR (173 aa). Residues 164 to 171, 189 to 193, 212 to 215, 276 to 279, and 311 to 313 contribute to the GTP site; these read GLPNAGKS, FTTLT, DIPG, NKVD, and ARL. Positions 171 and 191 each coordinate Mg(2+). Positions 335-411 constitute an OCT domain; sequence VFRPSWRGLR…RIGDVSFEFR (77 aa).

It belongs to the TRAFAC class OBG-HflX-like GTPase superfamily. OBG GTPase family. In terms of assembly, monomer. Mg(2+) is required as a cofactor.

It is found in the cytoplasm. In terms of biological role, an essential GTPase which binds GTP, GDP and possibly (p)ppGpp with moderate affinity, with high nucleotide exchange rates and a fairly low GTP hydrolysis rate. Plays a role in control of the cell cycle, stress response, ribosome biogenesis and in those bacteria that undergo differentiation, in morphogenesis control. This Rubrobacter xylanophilus (strain DSM 9941 / JCM 11954 / NBRC 16129 / PRD-1) protein is GTPase Obg.